A 334-amino-acid polypeptide reads, in one-letter code: 4-hydroxy-3-methylbut-2-enyl diphosphate reductase (334 aa).

Cys19 provides a ligand contact to [4Fe-4S] cluster. (2E)-4-hydroxy-3-methylbut-2-enyl diphosphate-binding residues include His48 and His84. Positions 48 and 84 each coordinate dimethylallyl diphosphate. Isopentenyl diphosphate contacts are provided by His48 and His84. A [4Fe-4S] cluster-binding site is contributed by Cys106. His134 contacts (2E)-4-hydroxy-3-methylbut-2-enyl diphosphate. Position 134 (His134) interacts with dimethylallyl diphosphate. His134 is an isopentenyl diphosphate binding site. Glu136 acts as the Proton donor in catalysis. Thr175 is a (2E)-4-hydroxy-3-methylbut-2-enyl diphosphate binding site. Cys205 lines the [4Fe-4S] cluster pocket. Positions 233, 234, 235, and 278 each coordinate (2E)-4-hydroxy-3-methylbut-2-enyl diphosphate. Ser233, Ser234, Asn235, and Ser278 together coordinate dimethylallyl diphosphate. 4 residues coordinate isopentenyl diphosphate: Ser233, Ser234, Asn235, and Ser278.

It belongs to the IspH family. It depends on [4Fe-4S] cluster as a cofactor.

It catalyses the reaction isopentenyl diphosphate + 2 oxidized [2Fe-2S]-[ferredoxin] + H2O = (2E)-4-hydroxy-3-methylbut-2-enyl diphosphate + 2 reduced [2Fe-2S]-[ferredoxin] + 2 H(+). The enzyme catalyses dimethylallyl diphosphate + 2 oxidized [2Fe-2S]-[ferredoxin] + H2O = (2E)-4-hydroxy-3-methylbut-2-enyl diphosphate + 2 reduced [2Fe-2S]-[ferredoxin] + 2 H(+). It functions in the pathway isoprenoid biosynthesis; dimethylallyl diphosphate biosynthesis; dimethylallyl diphosphate from (2E)-4-hydroxy-3-methylbutenyl diphosphate: step 1/1. Its pathway is isoprenoid biosynthesis; isopentenyl diphosphate biosynthesis via DXP pathway; isopentenyl diphosphate from 1-deoxy-D-xylulose 5-phosphate: step 6/6. Catalyzes the conversion of 1-hydroxy-2-methyl-2-(E)-butenyl 4-diphosphate (HMBPP) into a mixture of isopentenyl diphosphate (IPP) and dimethylallyl diphosphate (DMAPP). Acts in the terminal step of the DOXP/MEP pathway for isoprenoid precursor biosynthesis. The sequence is that of 4-hydroxy-3-methylbut-2-enyl diphosphate reductase from Chelativorans sp. (strain BNC1).